The chain runs to 484 residues: MNGALDHSDQPDPDAIKTFVGQIPRSWSEKELKELFEPYGAVYQINVLRDRSQNPPQSKGCCFVTFYTRKAALEAQNALHNIKTLPGMHHPIQMKPADSEKSNAVEDRKLFIGMVSKKCNENDIRVMFSPFGQIEECRILRGPDGLSRGCAFVTFSTRAMAQNAIKAMHQSQTMEGCSSPIVVKFADTQKDKEQRRLQQQLAQQMQQLNTATWGNLTGLGGLTPQYLALLQQATSSSNLGAFSGIQQMAGMNALQLQNLATLAAAAAAAQTSATTTNANPLSTTTGALGALTSPVAASTANSTAGAAMNSLTSLGTLQGLAGATVGLNNINALAGMAALNGGLGATGLTNGTAGTMDALTQAYSGIQQYAAAALPTLYSQSLLQQQSAAGSQKEGPEGANLFIYHLPQEFGDQDILQMFMPFGNVISAKVFIDKQTNLSKCFGFVSYDNPVSAQAAIQAMNGFQIGMKRLKVQLKRSKNDSKPY.

Necessary for nuclear export stretches follow at residues 1–89 (MNGA…PGMH) and 90–178 (HPIQ…EGCS). RRM domains are found at residues 16–99 (IKTF…PADS), 108–188 (RKLF…FADT), and 399–477 (ANLF…LKRS). Residues 188–240 (TQKDKEQRRLQQQLAQQMQQLNTATWGNLTGLGGLTPQYLALLQQATSSSNLG) are necessary for splicing activity. Residues 347–399 (GLTNGTAGTMDALTQAYSGIQQYAAAALPTLYSQSLLQQQSAAGSQKEGPEGA) form a necessary for nuclear localization region. Positions 426-484 (ISAKVFIDKQTNLSKCFGFVSYDNPVSAQAAIQAMNGFQIGMKRLKVQLKRSKNDSKPY) are necessary for nuclear localization and splicing activity.

Belongs to the CELF/BRUNOL family. Expressed in heart.

The protein resides in the nucleus. It is found in the cytoplasm. Functionally, RNA-binding protein implicated in the regulation of several post-transcriptional events. May be involved in mRNA translation repression and stability. Mediates exon inclusion in TNNT2 pre-mRNA. The polypeptide is CUGBP Elav-like family member 2 (CELF2) (Gallus gallus (Chicken)).